Here is a 105-residue protein sequence, read N- to C-terminus: Phosphoribosyl-ATP pyrophosphatase (105 aa).

The protein belongs to the PRA-PH family.

Its subcellular location is the cytoplasm. It carries out the reaction 1-(5-phospho-beta-D-ribosyl)-ATP + H2O = 1-(5-phospho-beta-D-ribosyl)-5'-AMP + diphosphate + H(+). It participates in amino-acid biosynthesis; L-histidine biosynthesis; L-histidine from 5-phospho-alpha-D-ribose 1-diphosphate: step 2/9. This chain is Phosphoribosyl-ATP pyrophosphatase, found in Vesicomyosocius okutanii subsp. Calyptogena okutanii (strain HA).